Here is a 397-residue protein sequence, read N- to C-terminus: uncharacterized protein (397 aa).

Ser-115 and Ser-141 each carry phosphoserine. The tract at residues 135–156 (NSLNHDSPPHTPARRSDNSTSK) is disordered. A Glycyl lysine isopeptide (Lys-Gly) (interchain with G-Cter in SUMO2) cross-link involves residue Lys-239. A phosphoserine mark is found at Ser-269 and Ser-296. Residues 289–316 (GRGPTKASPQPALTVKAKATSSATTLAS) are disordered. Residues 300-316 (ALTVKAKATSSATTLAS) are compositionally biased toward low complexity. Phosphoserine is present on Ser-342. Residues 354–397 (SEAQDSQVTSTKSPTVRCIVPDPPAPLASQRPPRRRWRRTCKDC) are disordered. The span at 356-367 (AQDSQVTSTKSP) shows a compositional bias: polar residues. Over residues 385–397 (PPRRRWRRTCKDC) the composition is skewed to basic residues.

This is an uncharacterized protein from Rattus norvegicus (Rat).